Here is a 565-residue protein sequence, read N- to C-terminus: CTP synthase (565 aa).

Residues 1–272 (MARPKNVKHI…DLRVMKKLGL (272 aa)) are amidoligase domain. Ser18 contacts CTP. Ser18 is a UTP binding site. 19–24 (SLGKGI) is an ATP binding site. An L-glutamine-binding site is contributed by Tyr59. Asp76 provides a ligand contact to ATP. Residues Asp76 and Glu146 each coordinate Mg(2+). Residues 153 to 155 (DIE), 193 to 198 (KTKPTQ), and Lys229 contribute to the CTP site. UTP is bound by residues 193 to 198 (KTKPTQ) and Lys229. Residues 299–543 (TIGVCGKYTE…VAAAKEYEKG (245 aa)) enclose the Glutamine amidotransferase type-1 domain. Gly363 lines the L-glutamine pocket. Cys390 acts as the Nucleophile; for glutamine hydrolysis in catalysis. L-glutamine contacts are provided by residues 391-394 (LGMQ), Glu414, and Arg471. Active-site residues include His516 and Glu518.

The protein belongs to the CTP synthase family. Homotetramer.

The enzyme catalyses UTP + L-glutamine + ATP + H2O = CTP + L-glutamate + ADP + phosphate + 2 H(+). It carries out the reaction L-glutamine + H2O = L-glutamate + NH4(+). The catalysed reaction is UTP + NH4(+) + ATP = CTP + ADP + phosphate + 2 H(+). Its pathway is pyrimidine metabolism; CTP biosynthesis via de novo pathway; CTP from UDP: step 2/2. With respect to regulation, allosterically activated by GTP, when glutamine is the substrate; GTP has no effect on the reaction when ammonia is the substrate. The allosteric effector GTP functions by stabilizing the protein conformation that binds the tetrahedral intermediate(s) formed during glutamine hydrolysis. Inhibited by the product CTP, via allosteric rather than competitive inhibition. Its function is as follows. Catalyzes the ATP-dependent amination of UTP to CTP with either L-glutamine or ammonia as the source of nitrogen. Regulates intracellular CTP levels through interactions with the four ribonucleotide triphosphates. This is CTP synthase from Chlorobium phaeobacteroides (strain DSM 266 / SMG 266 / 2430).